A 421-amino-acid polypeptide reads, in one-letter code: Acyl-coenzyme A thioesterase 1 (421 aa).

Catalysis depends on charge relay system residues Ser-232, Asp-326, and His-360.

Belongs to the C/M/P thioester hydrolase family. In terms of assembly, monomer.

Its subcellular location is the cytoplasm. The protein localises to the cytosol. It carries out the reaction hexadecanoyl-CoA + H2O = hexadecanoate + CoA + H(+). It catalyses the reaction decanoyl-CoA + H2O = decanoate + CoA + H(+). The enzyme catalyses dodecanoyl-CoA + H2O = dodecanoate + CoA + H(+). The catalysed reaction is tetradecanoyl-CoA + H2O = tetradecanoate + CoA + H(+). It carries out the reaction octadecanoyl-CoA + H2O = octadecanoate + CoA + H(+). It catalyses the reaction eicosanoyl-CoA + H2O = eicosanoate + CoA + H(+). The enzyme catalyses (9Z)-octadecenoyl-CoA + H2O = (9Z)-octadecenoate + CoA + H(+). The catalysed reaction is (9Z)-hexadecenoyl-CoA + H2O = (9Z)-hexadecenoate + CoA + H(+). It carries out the reaction (9E)-octadecenoyl-CoA + H2O = (9E)-octadecenoate + CoA + H(+). It functions in the pathway lipid metabolism; fatty acid metabolism. Its function is as follows. Catalyzes the hydrolysis of acyl-CoAs into free fatty acids and coenzyme A (CoASH), regulating their respective intracellular levels. More active towards saturated and unsaturated long chain fatty acyl-CoAs (C12-C20). The sequence is that of Acyl-coenzyme A thioesterase 1 (ACOT1) from Homo sapiens (Human).